The sequence spans 86 residues: RQC P-site tRNA stabilizing factor (86 aa).

One can recognise an S4 RNA-binding domain in the interval 1–62 (MRLDKFLKVS…QKLVTVQVNE (62 aa)).

The protein belongs to the RqcP family. Associates with stalled 50S ribosomal subunits. Binds to RqcH, 23S rRNA and the P-site tRNA. Does not require RqcH for association with 50S subunits. Crystallized 50S subunits are variously associated with an A/P-site tRNA with or without RqcH, as well as with P- and E-site tRNAs but no RqcH. Displaced from the 50S subunit by puromycin but not thiostrepton.

In terms of biological role, key component of the ribosome quality control system (RQC), a ribosome-associated complex that mediates the extraction of incompletely synthesized nascent chains from stalled ribosomes and their subsequent degradation. RqcH recruits Ala-charged tRNA, and with RqcP directs the elongation of stalled nascent chains on 50S ribosomal subunits, leading to non-templated C-terminal alanine extensions (Ala tail). The Ala tail promotes nascent chain degradation. RqcP is associated with the translocation-like movement of the peptidyl-tRNA from the A-site into the P-site. RqcH, RqcP and charged tRNA(Ala) are necessary and sufficient to add an Ala tail to a model stalled nascent peptide; does not add Val. In Bacillus subtilis (strain 168), this protein is RQC P-site tRNA stabilizing factor.